A 273-amino-acid polypeptide reads, in one-letter code: Undecaprenyl-diphosphatase (273 aa).

7 helical membrane-spanning segments follow: residues 6–26, 45–65, 90–110, 116–136, 190–210, 222–242, and 252–272; these read SLLI…LPVS, AKTF…VMFW, LTLI…LLFH, LFNP…LIAA, YAAS…ATAL, GDIP…LIAI, and ISFI…YVVF.

The protein belongs to the UppP family.

The protein localises to the cell inner membrane. It carries out the reaction di-trans,octa-cis-undecaprenyl diphosphate + H2O = di-trans,octa-cis-undecaprenyl phosphate + phosphate + H(+). In terms of biological role, catalyzes the dephosphorylation of undecaprenyl diphosphate (UPP). Confers resistance to bacitracin. In Escherichia coli O139:H28 (strain E24377A / ETEC), this protein is Undecaprenyl-diphosphatase.